Here is a 196-residue protein sequence, read N- to C-terminus: Phosphoheptose isomerase (196 aa).

The 160-residue stretch at 33 to 192 (LIQSLKNGGK…ESECGENGNT (160 aa)) folds into the SIS domain. 48 to 50 (NGG) contacts substrate. Zn(2+)-binding residues include H57 and E61. Residues E61, 90–91 (ND), 116–118 (STS), S121, and Q168 contribute to the substrate site. Residues Q168 and H176 each coordinate Zn(2+).

Belongs to the SIS family. GmhA subfamily. In terms of assembly, homotetramer. Zn(2+) serves as cofactor.

It localises to the cytoplasm. The enzyme catalyses 2 D-sedoheptulose 7-phosphate = D-glycero-alpha-D-manno-heptose 7-phosphate + D-glycero-beta-D-manno-heptose 7-phosphate. It participates in carbohydrate biosynthesis; D-glycero-D-manno-heptose 7-phosphate biosynthesis; D-glycero-alpha-D-manno-heptose 7-phosphate and D-glycero-beta-D-manno-heptose 7-phosphate from sedoheptulose 7-phosphate: step 1/1. Catalyzes the isomerization of sedoheptulose 7-phosphate in D-glycero-D-manno-heptose 7-phosphate. The polypeptide is Phosphoheptose isomerase (Helicobacter hepaticus (strain ATCC 51449 / 3B1)).